A 72-amino-acid chain; its full sequence is Translation initiation factor IF-1 (72 aa).

The region spanning 1-72 (MAKEDCIEME…SKGRIIYRAR (72 aa)) is the S1-like domain.

Belongs to the IF-1 family. As to quaternary structure, component of the 30S ribosomal translation pre-initiation complex which assembles on the 30S ribosome in the order IF-2 and IF-3, IF-1 and N-formylmethionyl-tRNA(fMet); mRNA recruitment can occur at any time during PIC assembly.

The protein localises to the cytoplasm. Its function is as follows. One of the essential components for the initiation of protein synthesis. Stabilizes the binding of IF-2 and IF-3 on the 30S subunit to which N-formylmethionyl-tRNA(fMet) subsequently binds. Helps modulate mRNA selection, yielding the 30S pre-initiation complex (PIC). Upon addition of the 50S ribosomal subunit IF-1, IF-2 and IF-3 are released leaving the mature 70S translation initiation complex. The polypeptide is Translation initiation factor IF-1 (Pseudoalteromonas atlantica (strain T6c / ATCC BAA-1087)).